We begin with the raw amino-acid sequence, 506 residues long: AAA-ATPase At4g25835 (506 aa).

Positions 1 to 20 are cleaved as a signal peptide; sequence MKEYWTSLASLLGVLAFCQS. 244–251 contacts ATP; that stretch reads GPPGTGKS. The tract at residues 462-506 is disordered; it reads GKSRVQNVSLEEQENRAFDSLYAEENGGEEEEIEDNICKSSDDCS. The span at 487-496 shows a compositional bias: acidic residues; it reads NGGEEEEIED. Over residues 497-506 the composition is skewed to basic and acidic residues; that stretch reads NICKSSDDCS.

It belongs to the AAA ATPase family. BCS1 subfamily. Mg(2+) serves as cofactor.

It catalyses the reaction ATP + H2O = ADP + phosphate + H(+). The chain is AAA-ATPase At4g25835 from Arabidopsis thaliana (Mouse-ear cress).